Here is a 450-residue protein sequence, read N- to C-terminus: UDP-N-acetylmuramoylalanine--D-glutamate ligase (450 aa).

Residue 112-118 (GSNGKTT) participates in ATP binding.

Belongs to the MurCDEF family.

The protein resides in the cytoplasm. It carries out the reaction UDP-N-acetyl-alpha-D-muramoyl-L-alanine + D-glutamate + ATP = UDP-N-acetyl-alpha-D-muramoyl-L-alanyl-D-glutamate + ADP + phosphate + H(+). It functions in the pathway cell wall biogenesis; peptidoglycan biosynthesis. Its function is as follows. Cell wall formation. Catalyzes the addition of glutamate to the nucleotide precursor UDP-N-acetylmuramoyl-L-alanine (UMA). In Cytophaga hutchinsonii (strain ATCC 33406 / DSM 1761 / CIP 103989 / NBRC 15051 / NCIMB 9469 / D465), this protein is UDP-N-acetylmuramoylalanine--D-glutamate ligase.